We begin with the raw amino-acid sequence, 134 residues long: Retinol-binding protein 2 (134 aa).

K41 and Q109 together coordinate all-trans-retinol.

It belongs to the calycin superfamily. Fatty-acid binding protein (FABP) family. As to expression, higher expression in adult small intestine and to a much lesser extent in fetal kidney.

It localises to the cytoplasm. Intracellular transport of retinol. This chain is Retinol-binding protein 2 (RBP2), found in Homo sapiens (Human).